Reading from the N-terminus, the 121-residue chain is Small ribosomal subunit protein uS13 (121 aa).

The disordered stretch occupies residues 91-121 (HRMSLPVRGQRTRTNARTRRGSRKTVAGRKK). Over residues 100 to 121 (QRTRTNARTRRGSRKTVAGRKK) the composition is skewed to basic residues.

This sequence belongs to the universal ribosomal protein uS13 family. As to quaternary structure, part of the 30S ribosomal subunit. Forms a loose heterodimer with protein S19. Forms two bridges to the 50S subunit in the 70S ribosome.

Its function is as follows. Located at the top of the head of the 30S subunit, it contacts several helices of the 16S rRNA. In the 70S ribosome it contacts the 23S rRNA (bridge B1a) and protein L5 of the 50S subunit (bridge B1b), connecting the 2 subunits; these bridges are implicated in subunit movement. Contacts the tRNAs in the A and P-sites. This Prochlorococcus marinus (strain SARG / CCMP1375 / SS120) protein is Small ribosomal subunit protein uS13.